A 101-amino-acid polypeptide reads, in one-letter code: UPF0473 protein EF_1204 (101 aa).

This sequence belongs to the UPF0473 family.

This chain is UPF0473 protein EF_1204, found in Enterococcus faecalis (strain ATCC 700802 / V583).